The sequence spans 159 residues: Disease resistance response protein Pi176 (159 aa).

Belongs to the BetVI family.

This Pisum sativum (Garden pea) protein is Disease resistance response protein Pi176.